The sequence spans 76 residues: Exodeoxyribonuclease 7 small subunit (76 aa).

The protein belongs to the XseB family. Heterooligomer composed of large and small subunits.

It localises to the cytoplasm. It carries out the reaction Exonucleolytic cleavage in either 5'- to 3'- or 3'- to 5'-direction to yield nucleoside 5'-phosphates.. In terms of biological role, bidirectionally degrades single-stranded DNA into large acid-insoluble oligonucleotides, which are then degraded further into small acid-soluble oligonucleotides. In Staphylococcus haemolyticus (strain JCSC1435), this protein is Exodeoxyribonuclease 7 small subunit.